Consider the following 159-residue polypeptide: Ribosomal RNA large subunit methyltransferase H (159 aa).

S-adenosyl-L-methionine is bound by residues L76, G108, and 127-132 (FGRLTL).

This sequence belongs to the RNA methyltransferase RlmH family. Homodimer.

It is found in the cytoplasm. The catalysed reaction is pseudouridine(1915) in 23S rRNA + S-adenosyl-L-methionine = N(3)-methylpseudouridine(1915) in 23S rRNA + S-adenosyl-L-homocysteine + H(+). Its function is as follows. Specifically methylates the pseudouridine at position 1915 (m3Psi1915) in 23S rRNA. This chain is Ribosomal RNA large subunit methyltransferase H, found in Listeria welshimeri serovar 6b (strain ATCC 35897 / DSM 20650 / CCUG 15529 / CIP 8149 / NCTC 11857 / SLCC 5334 / V8).